The sequence spans 435 residues: Enolase (435 aa).

Glutamine 163 provides a ligand contact to (2R)-2-phosphoglycerate. Glutamate 205 serves as the catalytic Proton donor. The Mg(2+) site is built by aspartate 243, glutamate 292, and aspartate 319. (2R)-2-phosphoglycerate-binding residues include lysine 344, arginine 373, serine 374, and lysine 395. Lysine 344 serves as the catalytic Proton acceptor.

It belongs to the enolase family. The cofactor is Mg(2+).

It localises to the cytoplasm. Its subcellular location is the secreted. The protein localises to the cell surface. The catalysed reaction is (2R)-2-phosphoglycerate = phosphoenolpyruvate + H2O. It participates in carbohydrate degradation; glycolysis; pyruvate from D-glyceraldehyde 3-phosphate: step 4/5. Catalyzes the reversible conversion of 2-phosphoglycerate (2-PG) into phosphoenolpyruvate (PEP). It is essential for the degradation of carbohydrates via glycolysis. In Streptococcus suis (strain 98HAH33), this protein is Enolase.